Here is a 301-residue protein sequence, read N- to C-terminus: Probable alpha-L-glutamate ligase (301 aa).

The region spanning 104-287 (LQLLSRKGVG…VAALVMEFIE (184 aa)) is the ATP-grasp domain. Residues lysine 141, 178 to 179 (EY), aspartate 187, and 211 to 213 (RSN) each bind ATP. Residues aspartate 248, glutamate 260, and asparagine 262 each contribute to the Mg(2+) site. Mn(2+) is bound by residues aspartate 248, glutamate 260, and asparagine 262.

This sequence belongs to the RimK family. It depends on Mg(2+) as a cofactor. Requires Mn(2+) as cofactor.

The chain is Probable alpha-L-glutamate ligase from Saccharophagus degradans (strain 2-40 / ATCC 43961 / DSM 17024).